A 411-amino-acid polypeptide reads, in one-letter code: Proteasome-activating nucleotidase 2 (411 aa).

A coiled-coil region spans residues 35 to 75; sequence IVAVNGELQAQLDDVEARREELREEVNRLQRENETLKTASL. ATP-binding positions include 196–201 and His335; that span reads GTGKTM. The interval 408 to 411 is docks into pockets in the proteasome alpha-ring to cause gate opening; it reads SYIQ.

It belongs to the AAA ATPase family. As to quaternary structure, homohexamer. The hexameric complex has a two-ring architecture resembling a top hat that caps the 20S proteasome core at one or both ends. Upon ATP-binding, the C-terminus of PAN interacts with the alpha-rings of the proteasome core by binding to the intersubunit pockets.

The protein localises to the cytoplasm. ATPase which is responsible for recognizing, binding, unfolding and translocation of substrate proteins into the archaeal 20S proteasome core particle. Is essential for opening the gate of the 20S proteasome via an interaction with its C-terminus, thereby allowing substrate entry and access to the site of proteolysis. Thus, the C-termini of the proteasomal ATPase function like a 'key in a lock' to induce gate opening and therefore regulate proteolysis. Unfolding activity requires energy from ATP hydrolysis, whereas ATP binding alone promotes ATPase-20S proteasome association which triggers gate opening, and supports translocation of unfolded substrates. This chain is Proteasome-activating nucleotidase 2, found in Halobacterium salinarum (strain ATCC 700922 / JCM 11081 / NRC-1) (Halobacterium halobium).